A 350-amino-acid polypeptide reads, in one-letter code: Methionine import ATP-binding protein MetN (350 aa).

One can recognise an ABC transporter domain in the interval 2 to 242 (IELKGISQHF…PRHDVTRALI (241 aa)). Position 39–46 (39–46 (GRSGAGKS)) interacts with ATP.

This sequence belongs to the ABC transporter superfamily. Methionine importer (TC 3.A.1.24) family. In terms of assembly, the complex is composed of two ATP-binding proteins (MetN), two transmembrane proteins (MetI) and a solute-binding protein (MetQ).

Its subcellular location is the cell inner membrane. It carries out the reaction L-methionine(out) + ATP + H2O = L-methionine(in) + ADP + phosphate + H(+). The enzyme catalyses D-methionine(out) + ATP + H2O = D-methionine(in) + ADP + phosphate + H(+). Functionally, part of the ABC transporter complex MetNIQ involved in methionine import. Responsible for energy coupling to the transport system. This chain is Methionine import ATP-binding protein MetN, found in Ralstonia nicotianae (strain ATCC BAA-1114 / GMI1000) (Ralstonia solanacearum).